We begin with the raw amino-acid sequence, 241 residues long: Ubiquinone biosynthesis O-methyltransferase (241 aa).

Positions 46, 66, 87, and 131 each coordinate S-adenosyl-L-methionine.

The protein belongs to the methyltransferase superfamily. UbiG/COQ3 family.

It carries out the reaction a 3-demethylubiquinol + S-adenosyl-L-methionine = a ubiquinol + S-adenosyl-L-homocysteine + H(+). The enzyme catalyses a 3-(all-trans-polyprenyl)benzene-1,2-diol + S-adenosyl-L-methionine = a 2-methoxy-6-(all-trans-polyprenyl)phenol + S-adenosyl-L-homocysteine + H(+). It functions in the pathway cofactor biosynthesis; ubiquinone biosynthesis. O-methyltransferase that catalyzes the 2 O-methylation steps in the ubiquinone biosynthetic pathway. This chain is Ubiquinone biosynthesis O-methyltransferase, found in Bordetella parapertussis (strain 12822 / ATCC BAA-587 / NCTC 13253).